A 256-amino-acid polypeptide reads, in one-letter code: MAWSASQYAKFEDERTRPARDLLAQVPLQHLRRAIDLGCGPGNSTELIIERYGADGVSGLDSDANMLEAARKRLPGTAFVEADLGSWQPTEPADLLFANAVFQWLPDHLDIFERLMDGLSEGGVLAVQMPDNLGEPSHLAMEETAHGGPWKAAFEEKGVRRQPLAPPSSYYSRLIAKAARVDIWHTIYNHPMADAAAIVEWVKGTGLMPYLARAGEKHREAFLADYLERIEKTYPKMSDGRVLLRFPRIFIVAVKG.

This sequence belongs to the methyltransferase superfamily. Tam family.

The protein localises to the cytoplasm. The catalysed reaction is trans-aconitate + S-adenosyl-L-methionine = (E)-3-(methoxycarbonyl)pent-2-enedioate + S-adenosyl-L-homocysteine. Catalyzes the S-adenosylmethionine monomethyl esterification of trans-aconitate. This is Trans-aconitate 2-methyltransferase from Rhizobium etli (strain ATCC 51251 / DSM 11541 / JCM 21823 / NBRC 15573 / CFN 42).